The primary structure comprises 435 residues: Histidinol dehydrogenase (435 aa).

Residues Tyr-131, Gln-189, and Asn-212 each coordinate NAD(+). Residues Ser-238, Gln-260, and His-263 each coordinate substrate. Residues Gln-260 and His-263 each contribute to the Zn(2+) site. Catalysis depends on proton acceptor residues Glu-327 and His-328. The substrate site is built by His-328, Asp-361, Glu-415, and His-420. Asp-361 lines the Zn(2+) pocket. Residue His-420 coordinates Zn(2+).

The protein belongs to the histidinol dehydrogenase family. In terms of assembly, homodimer. Zn(2+) serves as cofactor.

The enzyme catalyses L-histidinol + 2 NAD(+) + H2O = L-histidine + 2 NADH + 3 H(+). Its pathway is amino-acid biosynthesis; L-histidine biosynthesis; L-histidine from 5-phospho-alpha-D-ribose 1-diphosphate: step 9/9. Catalyzes the sequential NAD-dependent oxidations of L-histidinol to L-histidinaldehyde and then to L-histidine. The protein is Histidinol dehydrogenase (hisD) of Buchnera aphidicola subsp. Schizaphis graminum (strain Sg).